Consider the following 482-residue polypeptide: ATP synthase subunit beta (482 aa).

162–169 (GGAGVGKT) is an ATP binding site.

This sequence belongs to the ATPase alpha/beta chains family. F-type ATPases have 2 components, CF(1) - the catalytic core - and CF(0) - the membrane proton channel. CF(1) has five subunits: alpha(3), beta(3), gamma(1), delta(1), epsilon(1). CF(0) has four main subunits: a(1), b(1), b'(1) and c(9-12).

It is found in the cellular thylakoid membrane. The catalysed reaction is ATP + H2O + 4 H(+)(in) = ADP + phosphate + 5 H(+)(out). In terms of biological role, produces ATP from ADP in the presence of a proton gradient across the membrane. The catalytic sites are hosted primarily by the beta subunits. The sequence is that of ATP synthase subunit beta from Nostoc punctiforme (strain ATCC 29133 / PCC 73102).